We begin with the raw amino-acid sequence, 145 residues long: Putative pre-16S rRNA nuclease (145 aa).

The protein belongs to the YqgF nuclease family.

Its subcellular location is the cytoplasm. Its function is as follows. Could be a nuclease involved in processing of the 5'-end of pre-16S rRNA. The chain is Putative pre-16S rRNA nuclease from Prochlorococcus marinus (strain MIT 9211).